A 483-amino-acid chain; its full sequence is Nucleolar protein 4 (483 aa).

Disordered stretches follow at residues 210-418 (QQDE…PIPS) and 435-483 (SESR…DPQI). The span at 211–225 (QDEDESSIESDEFDM) shows a compositional bias: acidic residues. 3 stretches are compositionally biased toward polar residues: residues 229-254 (TRMS…TVHG), 262-271 (AESSNGNETL), and 302-317 (QPLN…QLTS). Composition is skewed to basic and acidic residues over residues 319 to 330 (FRIDDQGSDGKN) and 340 to 350 (LKMEREARENG). Residues 351 to 363 (SKSPAHSYSSYDS) show a composition bias toward polar residues. Basic and acidic residues-rich tracts occupy residues 364 to 374 (GKNESVDRGAE), 391 to 409 (HEDS…ERLK), and 435 to 451 (SESR…KAQD). A compositionally biased stretch (polar residues) spans 467–483 (ATYSTATVPGSQEDPQI).

Its subcellular location is the nucleus. The protein resides in the nucleolus. This is Nucleolar protein 4 (Nol4) from Mus musculus (Mouse).